The following is a 487-amino-acid chain: Glutamyl-tRNA(Gln) amidotransferase subunit A (487 aa).

Active-site charge relay system residues include Lys79 and Ser158. Ser182 (acyl-ester intermediate) is an active-site residue.

This sequence belongs to the amidase family. GatA subfamily. Heterotrimer of A, B and C subunits.

The enzyme catalyses L-glutamyl-tRNA(Gln) + L-glutamine + ATP + H2O = L-glutaminyl-tRNA(Gln) + L-glutamate + ADP + phosphate + H(+). Functionally, allows the formation of correctly charged Gln-tRNA(Gln) through the transamidation of misacylated Glu-tRNA(Gln) in organisms which lack glutaminyl-tRNA synthetase. The reaction takes place in the presence of glutamine and ATP through an activated gamma-phospho-Glu-tRNA(Gln). The protein is Glutamyl-tRNA(Gln) amidotransferase subunit A of Ehrlichia ruminantium (strain Welgevonden).